A 113-amino-acid polypeptide reads, in one-letter code: U11-theraphotoxin-Hhn1a (113 aa).

Positions 1-21 (MNTVRVAFLLVFVLAVSLGQA) are cleaved as a signal peptide. Positions 22 to 74 (DKDENRMEMQEKTEQGKSYLDFAENLLLQKLEELEAKLLEEDSEESRNSRQKR) are excised as a propeptide. Positions 61–83 (EEDSEESRNSRQKRCIGEGVPCD) are disordered. Cystine bridges form between Cys75–Cys90, Cys82–Cys95, and Cys89–Cys110.

This sequence belongs to the neurotoxin 14 (magi-1) family. 01 (HNTX-16) subfamily. Expressed by the venom gland.

It localises to the secreted. In terms of biological role, probable ion channel inhibitor. The chain is U11-theraphotoxin-Hhn1a from Cyriopagopus hainanus (Chinese bird spider).